We begin with the raw amino-acid sequence, 242 residues long: Protein unc-119 homolog B-A (242 aa).

Positions 1 to 20 (MSGSKREAALTGQPKDERKK) are enriched in basic and acidic residues. Residues 1-49 (MSGSKREAALTGQPKDERKKSGGGVINRLKARRVQGKESGTSDQSSVTP) form a disordered region. Over residues 38-48 (ESGTSDQSSVT) the composition is skewed to polar residues. Residue tyrosine 133 participates in tetradecanoate binding.

This sequence belongs to the PDE6D/unc-119 family.

Myristoyl-binding protein that acts as a cargo adapter: specifically binds the myristoyl moiety of a subset of N-terminally myristoylated proteins and is required for their localization. Plays a key role in localization of proteins to the primary cilium membrane. The chain is Protein unc-119 homolog B-A (unc119b-a) from Xenopus laevis (African clawed frog).